Here is a 303-residue protein sequence, read N- to C-terminus: Pseudouridine-5'-phosphate glycosidase (303 aa).

Glu24 acts as the Proton donor in catalysis. Lys85 and Val105 together coordinate substrate. Asp137 provides a ligand contact to Mn(2+). 139–141 (SAD) provides a ligand contact to substrate. The active-site Nucleophile is the Lys158.

It belongs to the pseudouridine-5'-phosphate glycosidase family. Homotrimer. Mn(2+) serves as cofactor.

It carries out the reaction D-ribose 5-phosphate + uracil = psi-UMP + H2O. Catalyzes the reversible cleavage of pseudouridine 5'-phosphate (PsiMP) to ribose 5-phosphate and uracil. Functions biologically in the cleavage direction, as part of a pseudouridine degradation pathway. The sequence is that of Pseudouridine-5'-phosphate glycosidase from Herpetosiphon aurantiacus (strain ATCC 23779 / DSM 785 / 114-95).